Here is a 144-residue protein sequence, read N- to C-terminus: Small ribosomal subunit protein eS19A (144 aa).

The interval 83–102 (VNRGMRPSHHRDGSGSVQRK) is disordered.

It belongs to the eukaryotic ribosomal protein eS19 family. Component of the small ribosomal subunit (SSU). Mature yeast ribosomes consist of a small (40S) and a large (60S) subunit. The 40S small subunit contains 1 molecule of ribosomal RNA (18S rRNA) and at least 33 different proteins. The large 60S subunit contains 3 rRNA molecules (25S, 5.8S and 5S rRNA) and at least 46 different proteins.

The protein resides in the cytoplasm. The protein localises to the nucleus. Its subcellular location is the nucleolus. In terms of biological role, component of the ribosome, a large ribonucleoprotein complex responsible for the synthesis of proteins in the cell. The small ribosomal subunit (SSU) binds messenger RNAs (mRNAs) and translates the encoded message by selecting cognate aminoacyl-transfer RNA (tRNA) molecules. The large subunit (LSU) contains the ribosomal catalytic site termed the peptidyl transferase center (PTC), which catalyzes the formation of peptide bonds, thereby polymerizing the amino acids delivered by tRNAs into a polypeptide chain. The nascent polypeptides leave the ribosome through a tunnel in the LSU and interact with protein factors that function in enzymatic processing, targeting, and the membrane insertion of nascent chains at the exit of the ribosomal tunnel. eS19 is required for proper maturation of the small (40S) ribosomal subunit. Binds to 40S pre-ribosomal particles, probably required after association of NOC4 but before association of ENP1, TSR1 and RIO2 with 20/21S pre-rRNA. This Schizosaccharomyces pombe (strain 972 / ATCC 24843) (Fission yeast) protein is Small ribosomal subunit protein eS19A (rps1901).